Here is a 219-residue protein sequence, read N- to C-terminus: Guanylate kinase (219 aa).

The region spanning 15–194 (GLMFVLSSPS…AFAEVQSILK (180 aa)) is the Guanylate kinase-like domain. Residue 22–29 (SPSGAGKT) participates in ATP binding.

The protein belongs to the guanylate kinase family.

It is found in the cytoplasm. The catalysed reaction is GMP + ATP = GDP + ADP. Functionally, essential for recycling GMP and indirectly, cGMP. This chain is Guanylate kinase, found in Bradyrhizobium diazoefficiens (strain JCM 10833 / BCRC 13528 / IAM 13628 / NBRC 14792 / USDA 110).